Reading from the N-terminus, the 602-residue chain is Adenylosuccinate synthetase (602 aa).

GTP is bound by residues G74–K80 and G104–T106. D75 acts as the Proton acceptor in catalysis. D75 and G104 together coordinate Mg(2+). IMP is bound by residues D75–K78, N102–H105, T189, K203, Q315, T331, and K459. H105 (proton donor) is an active-site residue. A455–R461 lines the substrate pocket. Residues R461 and G589–G591 contribute to the GTP site.

The protein belongs to the adenylosuccinate synthetase family. Homodimer. Mg(2+) serves as cofactor.

The protein localises to the cytoplasm. It carries out the reaction IMP + L-aspartate + GTP = N(6)-(1,2-dicarboxyethyl)-AMP + GDP + phosphate + 2 H(+). It participates in purine metabolism; AMP biosynthesis via de novo pathway; AMP from IMP: step 1/2. Functionally, plays an important role in the salvage pathway for purine nucleotide biosynthesis. Catalyzes the first committed step in the biosynthesis of AMP from IMP. The sequence is that of Adenylosuccinate synthetase from Trypanosoma brucei brucei (strain 927/4 GUTat10.1).